A 194-amino-acid chain; its full sequence is Fe/S biogenesis protein NfuA (194 aa).

Positions 151 and 154 each coordinate [4Fe-4S] cluster.

This sequence belongs to the NfuA family. As to quaternary structure, homodimer. It depends on [4Fe-4S] cluster as a cofactor.

Involved in iron-sulfur cluster biogenesis. Binds a 4Fe-4S cluster, can transfer this cluster to apoproteins, and thereby intervenes in the maturation of Fe/S proteins. Could also act as a scaffold/chaperone for damaged Fe/S proteins. In Pasteurella multocida (strain Pm70), this protein is Fe/S biogenesis protein NfuA.